We begin with the raw amino-acid sequence, 490 residues long: Betaine aldehyde dehydrogenase (490 aa).

Threonine 26, isoleucine 27, and aspartate 93 together coordinate K(+). Residue 150–152 (GAW) participates in NAD(+) binding. Catalysis depends on lysine 162, which acts as the Charge relay system. 176 to 179 (KPSE) lines the NAD(+) pocket. Valine 180 provides a ligand contact to K(+). 230–233 (GVAS) contributes to the NAD(+) binding site. Leucine 246 is a binding site for K(+). Glutamate 252 acts as the Proton acceptor in catalysis. NAD(+) contacts are provided by glycine 254, cysteine 286, and glutamate 387. Cysteine 286 (nucleophile) is an active-site residue. Cysteine 286 is subject to Cysteine sulfenic acid (-SOH). Residues lysine 457 and glycine 460 each contribute to the K(+) site. Glutamate 464 (charge relay system) is an active-site residue.

This sequence belongs to the aldehyde dehydrogenase family. In terms of assembly, dimer of dimers. K(+) serves as cofactor.

It carries out the reaction betaine aldehyde + NAD(+) + H2O = glycine betaine + NADH + 2 H(+). Its pathway is amine and polyamine biosynthesis; betaine biosynthesis via choline pathway; betaine from betaine aldehyde: step 1/1. In terms of biological role, involved in the biosynthesis of the osmoprotectant glycine betaine. Catalyzes the irreversible oxidation of betaine aldehyde to the corresponding acid. The sequence is that of Betaine aldehyde dehydrogenase from Shigella flexneri serotype 5b (strain 8401).